The chain runs to 535 residues: uncharacterized protein (535 aa).

A disordered region spans residues 1 to 34; it reads MKAIDNQIRNISSSHQDKHSDKVNSHQHHGKVDK. The segment covering 15–34 has biased composition (basic and acidic residues); sequence HQDKHSDKVNSHQHHGKVDK.

This is an uncharacterized protein from Escherichia coli (strain K12).